Here is a 161-residue protein sequence, read N- to C-terminus: Epithelial membrane protein 2 (161 aa).

The next 4 membrane-spanning stretches (helical) occupy residues 1–21 (MLVI…LLFI), 67–87 (TMIL…LQLF), 95–115 (FVFT…GASI), and 137–157 (FVVA…YLVL).

Belongs to the PMP-22/EMP/MP20 family. Expressed in the arches, orbits, pectoral fins, vessels, pronephric renal tubules, and glomeruli.

Its subcellular location is the golgi apparatus membrane. The protein localises to the cell membrane. The protein resides in the apical cell membrane. It localises to the membrane raft. It is found in the cytoplasm. Its subcellular location is the nucleus. The protein localises to the perinuclear region. Functions as a key regulator of cell membrane composition by regulating protein surface expression. Also, plays a role in regulation of processes including cell migration, cell proliferation, cell contraction and cell adhesion. May play a role in glomerular filtration. The protein is Epithelial membrane protein 2 (emp2) of Danio rerio (Zebrafish).